The primary structure comprises 699 residues: Protein STRUBBELIG-RECEPTOR FAMILY 5 (699 aa).

The signal sequence occupies residues 1–22 (MTQKLVRLVIVSLAITVTLLQA). Over 23-273 (KTDNQEVSAL…DGGGITAGTG (251 aa)) the chain is Extracellular. 5 LRR repeats span residues 93 to 115 (SLTT…LPPN), 116 to 136 (IANL…SLSQ), 139 to 161 (NLQS…FQKL), 163 to 186 (KLET…ANLT), and 187 to 209 (SLKK…RNLA). Asn-184 carries an N-linked (GlcNAc...) asparagine glycan. The disordered stretch occupies residues 239 to 263 (NDWSTETAPPPPPGVKYGRKSSGSK). Residues 274-294 (MVIAGACLGVLVLIIVLIALV) traverse the membrane as a helical segment. Residues 295–699 (SKKKSSLSPH…SYRAHDDYDY (405 aa)) are Cytoplasmic-facing. Ser-368 is modified (phosphoserine). The region spanning 404–675 (FSPGNLLGEG…SEVVEALVRM (272 aa)) is the Protein kinase domain. ATP-binding positions include 410 to 418 (LGEGSIGRV) and Lys-432.

This sequence belongs to the protein kinase superfamily. Ser/Thr protein kinase family. Expressed in leaves and flowers.

The protein localises to the membrane. This chain is Protein STRUBBELIG-RECEPTOR FAMILY 5 (SRF5), found in Arabidopsis thaliana (Mouse-ear cress).